The sequence spans 124 residues: Seripauperin-17 (124 aa).

Positions Met1 to Ala20 are cleaved as a signal peptide.

It belongs to the SRP1/TIP1 family. Seripauperin subfamily.

The protein is Seripauperin-17 (PAU17) of Saccharomyces cerevisiae (strain ATCC 204508 / S288c) (Baker's yeast).